The sequence spans 343 residues: Palmitoyltransferase ZDHHC4 (343 aa).

The Lumenal segment spans residues 1-2 (MD). Residues 3-23 (FLVLFLLYLALVLLGFVMICI) form a helical membrane-spanning segment. The Cytoplasmic segment spans residues 24 to 67 (GSKTHYLQGLISRGAQVFSYIIPECLQRAMLSVLHYLFHTRNYT). Residues 68–88 (FVVLHLILQGMVYTEYTWEIF) traverse the membrane as a helical segment. The Lumenal segment spans residues 89-95 (GLCQQLE). The chain crosses the membrane as a helical span at residues 96–116 (FSLYYLFLPYLLLIVNLLFFT). The Cytoplasmic portion of the chain corresponds to 117 to 196 (LSCVTNPGTI…GAWNTRYFLS (80 aa)). Residues 149-199 (VRCPTCDLRKPARSKHCSVCNRCVHRFDHHCVWVNNCIGAWNTRYFLSYLF) enclose the DHHC domain. Cys-179 (S-palmitoyl cysteine intermediate) is an active-site residue. A helical transmembrane segment spans residues 197 to 217 (YLFTLTASAATMAVVSTVFLV). Topologically, residues 218–255 (RLVVMSDVYLQTYVDDLGHLQVVDTVFLVQYLFLTFPR) are lumenal. Residues 256 to 276 (IVFLVGFVVVLSFLLGGYLCF) form a helical membrane-spanning segment. Over 277–343 (CLYLAATNQT…ATACYERKEK (67 aa)) the chain is Cytoplasmic. The Di-lysine motif signature appears at 340–343 (RKEK).

It belongs to the DHHC palmitoyltransferase family. In terms of assembly, interacts with CPT1A.

The protein localises to the endoplasmic reticulum membrane. Its subcellular location is the golgi apparatus membrane. It is found in the cell membrane. The enzyme catalyses L-cysteinyl-[protein] + hexadecanoyl-CoA = S-hexadecanoyl-L-cysteinyl-[protein] + CoA. Functionally, palmitoyltransferase that could catalyze the addition of palmitate onto protein substrates including the D(2) dopamine receptor DRD2, GSK3B or MAVS. Mediates GSK3B palmitoylation to prevent its AKT1-mediated phosphorylation leading to activation of the STAT3 signaling pathway. Also catalyzes MAVS palmitoylation which promotes its stabilization and activation by inhibiting 'Lys-48'- but facilitating 'Lys-63'-linked ubiquitination. This Bos taurus (Bovine) protein is Palmitoyltransferase ZDHHC4.